Here is a 254-residue protein sequence, read N- to C-terminus: Small ribosomal subunit protein uS2 (254 aa).

It belongs to the universal ribosomal protein uS2 family.

The protein is Small ribosomal subunit protein uS2 of Borrelia duttonii (strain Ly).